Consider the following 178-residue polypeptide: MASLSRAPQQWATFARVWYLLDGKMQPPGKLAALASVRLQGLHKPVYHQLSDCGDHVVIMNTRHIAFSGNKWEQKVYSSHTGYPGGFKQVTAAQLHRKDPVAIVKLAIYGMLPKNLHRRTLMQRLHLFPDEDIPEDILKNLTEELPQPRKVPRRLDEYTQEEIEAFPRVWSPPEDYRL.

Belongs to the universal ribosomal protein uL13 family. Component of the mitochondrial ribosome large subunit (39S) which comprises a 16S rRNA and about 50 distinct proteins. Interacts with OXA1L.

It is found in the mitochondrion. This is Large ribosomal subunit protein uL13m (MRPL13) from Bos taurus (Bovine).